A 113-amino-acid chain; its full sequence is Na(+)/H(+) antiporter subunit C1 (113 aa).

3 consecutive transmembrane segments (helical) span residues 1-21, 28-48, and 72-92; these read MEII…YLVL, IVMG…TMGG, and LILT…VLAF.

It belongs to the CPA3 antiporters (TC 2.A.63) subunit C family. In terms of assembly, may form a heterooligomeric complex that consists of seven subunits: mnhA1, mnhB1, mnhC1, mnhD1, mnhE1, mnhF1 and mnhG1.

The protein resides in the cell membrane. Its function is as follows. Mnh complex is a Na(+)/H(+) antiporter involved in Na(+) excretion. The chain is Na(+)/H(+) antiporter subunit C1 (mnhC1) from Staphylococcus haemolyticus (strain JCSC1435).